The following is a 490-amino-acid chain: GTPase Der (490 aa).

2 EngA-type G domains span residues 3–166 (PVVA…MDDV) and 203–376 (IKLA…DSST). GTP contacts are provided by residues 9–16 (GRPNVGKS), 56–60 (DTGGI), 118–121 (NKTD), 209–216 (GRPNVGKS), 256–260 (DTAGV), and 321–324 (NKWD). The region spanning 377–461 (RRVSTAMLTR…PIRIQFKEGE (85 aa)) is the KH-like domain.

The protein belongs to the TRAFAC class TrmE-Era-EngA-EngB-Septin-like GTPase superfamily. EngA (Der) GTPase family. As to quaternary structure, associates with the 50S ribosomal subunit.

GTPase that plays an essential role in the late steps of ribosome biogenesis. The polypeptide is GTPase Der (Salmonella typhi).